The chain runs to 144 residues: Large ribosomal subunit protein uL15 (144 aa).

Positions 1–57 are disordered; sequence MELNNLKPAEGAKHAKRRVGRGIGSGLGKTAGRGHKGQKSRSGGFHKVGFEGGQMPL. Residues 21 to 31 are compositionally biased toward gly residues; it reads RGIGSGLGKTA.

The protein belongs to the universal ribosomal protein uL15 family. In terms of assembly, part of the 50S ribosomal subunit.

In terms of biological role, binds to the 23S rRNA. The polypeptide is Large ribosomal subunit protein uL15 (Paraburkholderia xenovorans (strain LB400)).